Consider the following 584-residue polypeptide: 2-succinyl-5-enolpyruvyl-6-hydroxy-3-cyclohexene-1-carboxylate synthase (584 aa).

The protein belongs to the TPP enzyme family. MenD subfamily. As to quaternary structure, homodimer. It depends on Mg(2+) as a cofactor. Requires Mn(2+) as cofactor. Thiamine diphosphate serves as cofactor.

It carries out the reaction isochorismate + 2-oxoglutarate + H(+) = 5-enolpyruvoyl-6-hydroxy-2-succinyl-cyclohex-3-ene-1-carboxylate + CO2. The protein operates within quinol/quinone metabolism; 1,4-dihydroxy-2-naphthoate biosynthesis; 1,4-dihydroxy-2-naphthoate from chorismate: step 2/7. It participates in quinol/quinone metabolism; menaquinone biosynthesis. Its function is as follows. Catalyzes the thiamine diphosphate-dependent decarboxylation of 2-oxoglutarate and the subsequent addition of the resulting succinic semialdehyde-thiamine pyrophosphate anion to isochorismate to yield 2-succinyl-5-enolpyruvyl-6-hydroxy-3-cyclohexene-1-carboxylate (SEPHCHC). The sequence is that of 2-succinyl-5-enolpyruvyl-6-hydroxy-3-cyclohexene-1-carboxylate synthase from Bacillus cereus (strain ATCC 14579 / DSM 31 / CCUG 7414 / JCM 2152 / NBRC 15305 / NCIMB 9373 / NCTC 2599 / NRRL B-3711).